We begin with the raw amino-acid sequence, 292 residues long: Elongation factor Ts (292 aa).

Residues 79 to 82 (TDFV) form an involved in Mg(2+) ion dislocation from EF-Tu region.

The protein belongs to the EF-Ts family.

The protein localises to the cytoplasm. Its function is as follows. Associates with the EF-Tu.GDP complex and induces the exchange of GDP to GTP. It remains bound to the aminoacyl-tRNA.EF-Tu.GTP complex up to the GTP hydrolysis stage on the ribosome. This is Elongation factor Ts from Mycoplasmoides gallisepticum (strain R(low / passage 15 / clone 2)) (Mycoplasma gallisepticum).